A 150-amino-acid chain; its full sequence is Siroheme decarboxylase NirD subunit (150 aa).

Belongs to the Ahb/Nir family. In terms of assembly, probably forms a complex composed of NirD, NirL, NirG and NirH. All proteins are required for the total conversion of siroheme to didecarboxysiroheme.

The catalysed reaction is siroheme + 2 H(+) = 12,18-didecarboxysiroheme + 2 CO2. It participates in porphyrin-containing compound metabolism. Involved in heme d1 biosynthesis. Catalyzes the decarboxylation of siroheme into didecarboxysiroheme. The chain is Siroheme decarboxylase NirD subunit from Pseudomonas aeruginosa (strain ATCC 15692 / DSM 22644 / CIP 104116 / JCM 14847 / LMG 12228 / 1C / PRS 101 / PAO1).